The following is a 299-amino-acid chain: Probable transport accessory protein MmpS3 (299 aa).

The tract at residues 1–72 is disordered; sequence MSGPNPPGRE…EHVTGGPYVP (72 aa). Residues 101 to 121 traverse the membrane as a helical segment; that stretch reads VVGVAAIIAAVALVVSVSLLV. Over residues 128-139 the composition is skewed to polar residues; the sequence is KLATGDTTSSAP. Positions 128–213 are disordered; the sequence is KLATGDTTSS…TTTTPTGPRQ (86 aa). Residues 150-163 are compositionally biased toward pro residues; the sequence is PAPPPPPPAPPPTT. Residues 164–176 are compositionally biased toward low complexity; the sequence is EIPTATETQTVTV. The segment covering 177–193 has biased composition (pro residues); the sequence is TPPPPPPPATTTAPPPA.

This sequence belongs to the MmpS family.

Its subcellular location is the cell membrane. The sequence is that of Probable transport accessory protein MmpS3 (mmpS3) from Mycobacterium tuberculosis (strain CDC 1551 / Oshkosh).